The sequence spans 351 residues: Ubiquinol oxidase 4, chloroplastic/chromoplastic (351 aa).

The transit peptide at 1–56 (MAAISGISSGTLTISRPLVTLRRSRAAVSYSSSHRLLHHLPLSSRRLLLRNNHRVQ) directs the protein to the chloroplast and chromoplast. The interval 71–91 (ESFKAETSTGTEPLEEPNMSS) is disordered. A helical transmembrane segment spans residues 132–152 (FFVLETIARVPYFAFMSVLHM). The Fe cation site is built by E136, E175, and H178. A helical transmembrane segment spans residues 195 to 215 (FLAQHIATFYYFMTVFLYILS). Positions 227, 296, and 299 each coordinate Fe cation.

This sequence belongs to the alternative oxidase family. It depends on Fe cation as a cofactor. In terms of tissue distribution, ubiquitous.

The protein resides in the plastid. Its subcellular location is the chloroplast thylakoid membrane. It is found in the chromoplast membrane. It catalyses the reaction 2 a ubiquinol + O2 = 2 a ubiquinone + 2 H2O. Functionally, acts early in chloroplast biogenesis as a component of a redox chain responsible for phytoene desaturation. Prevents the generation of toxic oxygen radicals and photooxidation of the nascent photosynthetic apparatus. Involved in the differentiation of multiple plastid types, including chloroplasts, amyloplasts, and etioplasts. Might participate in the chloroplast respiratory chain. This chain is Ubiquinol oxidase 4, chloroplastic/chromoplastic (AOX4), found in Arabidopsis thaliana (Mouse-ear cress).